The chain runs to 157 residues: Protein Smg homolog (157 aa).

Belongs to the Smg family.

The chain is Protein Smg homolog from Stenotrophomonas maltophilia (strain R551-3).